The following is a 376-amino-acid chain: Dihydroorotate dehydrogenase (quinone) (376 aa).

Residues 78–82 (AGFDK) and T102 each bind FMN. Residue K82 coordinates substrate. Residue 127–131 (NRMGF) coordinates substrate. N157 and N190 together coordinate FMN. N190 lines the substrate pocket. S193 (nucleophile) is an active-site residue. N195 is a binding site for substrate. FMN contacts are provided by K228 and T256. Substrate is bound at residue 257–258 (NT). FMN-binding positions include G286, G315, and 336-337 (YT).

Belongs to the dihydroorotate dehydrogenase family. Type 2 subfamily. Monomer. The cofactor is FMN.

The protein localises to the cell membrane. It catalyses the reaction (S)-dihydroorotate + a quinone = orotate + a quinol. It participates in pyrimidine metabolism; UMP biosynthesis via de novo pathway; orotate from (S)-dihydroorotate (quinone route): step 1/1. Functionally, catalyzes the conversion of dihydroorotate to orotate with quinone as electron acceptor. The protein is Dihydroorotate dehydrogenase (quinone) of Nostoc sp. (strain PCC 7120 / SAG 25.82 / UTEX 2576).